We begin with the raw amino-acid sequence, 331 residues long: Probable transcriptional regulatory protein At2g25830 (331 aa).

This sequence belongs to the TACO1 family.

The protein is Probable transcriptional regulatory protein At2g25830 of Arabidopsis thaliana (Mouse-ear cress).